The sequence spans 404 residues: NADH-quinone oxidoreductase subunit D 2 (404 aa).

This sequence belongs to the complex I 49 kDa subunit family. NDH-1 is composed of 14 different subunits. Subunits NuoB, C, D, E, F, and G constitute the peripheral sector of the complex.

It is found in the cell inner membrane. It carries out the reaction a quinone + NADH + 5 H(+)(in) = a quinol + NAD(+) + 4 H(+)(out). Functionally, NDH-1 shuttles electrons from NADH, via FMN and iron-sulfur (Fe-S) centers, to quinones in the respiratory chain. The immediate electron acceptor for the enzyme in this species is believed to be ubiquinone. Couples the redox reaction to proton translocation (for every two electrons transferred, four hydrogen ions are translocated across the cytoplasmic membrane), and thus conserves the redox energy in a proton gradient. In Rhizobium etli (strain ATCC 51251 / DSM 11541 / JCM 21823 / NBRC 15573 / CFN 42), this protein is NADH-quinone oxidoreductase subunit D 2.